The chain runs to 904 residues: Nitrate reductase [NADH] 1 (904 aa).

Composition is skewed to polar residues over residues Met-1–Phe-10 and Ser-39–Ile-50. Residues Met-1–Glu-65 form a disordered region. Residues Ser-56 to Glu-65 show a composition bias toward acidic residues. Cys-183 provides a ligand contact to Mo-molybdopterin. The 76-residue stretch at Ser-531 to Leu-606 folds into the Cytochrome b5 heme-binding domain. The heme site is built by His-566 and His-589. The region spanning Arg-647 to Gln-759 is the FAD-binding FR-type domain. FAD contacts are provided by residues Arg-699–Thr-702, Val-716–Tyr-720, Phe-721, Phe-728, Gln-733–Ser-735, and Thr-786.

The protein belongs to the nitrate reductase family. In terms of assembly, homodimer. Requires FAD as cofactor. The cofactor is heme. Mo-molybdopterin serves as cofactor.

It catalyses the reaction nitrite + NAD(+) + H2O = nitrate + NADH + H(+). With respect to regulation, regulated by the nitrogen source and controlled by the circadian rhythm. Its function is as follows. Nitrate reductase is a key enzyme involved in the first step of nitrate assimilation in plants, fungi and bacteria. This is Nitrate reductase [NADH] 1 (NIA1) from Nicotiana tabacum (Common tobacco).